The sequence spans 321 residues: tRNA pseudouridine synthase B (321 aa).

The active-site Nucleophile is Asp-47.

This sequence belongs to the pseudouridine synthase TruB family. Type 1 subfamily.

The enzyme catalyses uridine(55) in tRNA = pseudouridine(55) in tRNA. Functionally, responsible for synthesis of pseudouridine from uracil-55 in the psi GC loop of transfer RNAs. The sequence is that of tRNA pseudouridine synthase B from Shewanella baltica (strain OS223).